A 235-amino-acid polypeptide reads, in one-letter code: Segregation and condensation protein A (235 aa).

It belongs to the ScpA family. As to quaternary structure, component of a cohesin-like complex composed of ScpA, ScpB and the Smc homodimer, in which ScpA and ScpB bind to the head domain of Smc. The presence of the three proteins is required for the association of the complex with DNA.

It localises to the cytoplasm. Functionally, participates in chromosomal partition during cell division. May act via the formation of a condensin-like complex containing Smc and ScpB that pull DNA away from mid-cell into both cell halves. In Streptococcus mutans serotype c (strain ATCC 700610 / UA159), this protein is Segregation and condensation protein A.